The following is a 185-amino-acid chain: ATP-dependent protease subunit HslV (185 aa).

Thr-12 is a catalytic residue. Ala-168, Cys-171, and Thr-174 together coordinate Na(+).

The protein belongs to the peptidase T1B family. HslV subfamily. A double ring-shaped homohexamer of HslV is capped on each side by a ring-shaped HslU homohexamer. The assembly of the HslU/HslV complex is dependent on binding of ATP.

It is found in the cytoplasm. The enzyme catalyses ATP-dependent cleavage of peptide bonds with broad specificity.. Allosterically activated by HslU binding. In terms of biological role, protease subunit of a proteasome-like degradation complex believed to be a general protein degrading machinery. This is ATP-dependent protease subunit HslV from Cereibacter sphaeroides (strain KD131 / KCTC 12085) (Rhodobacter sphaeroides).